The primary structure comprises 178 residues: CRISPR system ring nuclease SSO2081 (178 aa).

The transition state stabilizer stretch occupies residues 105 to 106; it reads RK.

This sequence belongs to the cOA ring nuclease family. Homodimer. Does not require a metal cofactor. serves as cofactor.

It is found in the cytoplasm. It carries out the reaction cyclic tetraadenylate = 2 5'-hydroxy-diadenylate 2',3'-cylic phosphate. Functionally, CRISPR (clustered regularly interspaced short palindromic repeat) is an adaptive immune system that provides protection against mobile genetic elements (viruses, transposable elements and conjugative plasmids). CRISPR clusters contain spacers, sequences complementary to antecedent mobile elements, and target invading nucleic acids. CRISPR clusters are transcribed and processed into CRISPR RNA (crRNA). A nuclease that degrades cyclic oligoadenylates (cOA), second messengers that induce an antiviral state important for defense against invading nucleic acids. Destruction of cOA deactivates the Csx1 ribonuclease, preventing uncontrolled degradation of cellular RNA. Degrades cA4 (a tetraadenylate ring) into a linear diadenylate product with 5'-OH and 2',3'-cyclic phosphate termini. Is 10-fold more active than SSO1393, suggesting this is the major cA4 degradation enzyme. Is highly specific for cA4; it has very poor activity on cA6 and no discernible activity against a number of cyclic dinucleotides. There may be 2 active sites per homodimer. This is CRISPR system ring nuclease SSO2081 from Saccharolobus solfataricus (strain ATCC 35092 / DSM 1617 / JCM 11322 / P2) (Sulfolobus solfataricus).